We begin with the raw amino-acid sequence, 303 residues long: Sodium/potassium-transporting ATPase subunit beta-1 (303 aa).

Topologically, residues 1-34 (MPAATKDSDGGWKKFLWNSEKKEFLGRTGGSWAK) are cytoplasmic. A helical; Signal-anchor for type II membrane protein transmembrane segment spans residues 35–55 (ILLFYVIFYGCLAGIFIGTIQ). The Extracellular portion of the chain corresponds to 56–303 (ALLLTINDFK…FDVKFTINES (248 aa)). N-linked (GlcNAc...) asparagine glycosylation occurs at asparagine 113. 2 cysteine pairs are disulfide-bonded: cysteine 126-cysteine 149 and cysteine 159-cysteine 175. N-linked (GlcNAc...) asparagine glycans are attached at residues asparagine 194 and asparagine 264. A disulfide bond links cysteine 214 and cysteine 275.

This sequence belongs to the X(+)/potassium ATPases subunit beta family. In terms of assembly, the sodium/potassium-transporting ATPase is composed of a catalytic alpha subunit, an auxiliary non-catalytic beta subunit and an additional regulatory subunit. Detected in all tissues except liver and cardiac muscle. Highest levels found in intestine, ovary and kidney with marginally lower levels in brain, spleen, esophagus, eye and pancreas, intermediate levels in gill and low levels in white and red skeletal muscle.

Its subcellular location is the cell membrane. In terms of biological role, this is the non-catalytic component of the active enzyme, which catalyzes the hydrolysis of ATP coupled with the exchange of Na(+) and K(+) ions across the plasma membrane. The beta subunit regulates, through assembly of alpha/beta heterodimers, the number of sodium pumps transported to the plasma membrane. This is Sodium/potassium-transporting ATPase subunit beta-1 (atp1b1) from Anguilla anguilla (European freshwater eel).